The following is a 369-amino-acid chain: Methionine import ATP-binding protein MetN 1 (369 aa).

Positions 1–26 (MTTMTVPPSLLPLEPFPTAPDTRAST) are disordered. The ABC transporter domain occupies 29–265 (IRLHGLGKRY…PRHAVTRSLL (237 aa)). Residue 62-69 (GRSGAGKS) coordinates ATP.

It belongs to the ABC transporter superfamily. Methionine importer (TC 3.A.1.24) family. As to quaternary structure, the complex is composed of two ATP-binding proteins (MetN), two transmembrane proteins (MetI) and a solute-binding protein (MetQ).

It is found in the cell inner membrane. It catalyses the reaction L-methionine(out) + ATP + H2O = L-methionine(in) + ADP + phosphate + H(+). The catalysed reaction is D-methionine(out) + ATP + H2O = D-methionine(in) + ADP + phosphate + H(+). In terms of biological role, part of the ABC transporter complex MetNIQ involved in methionine import. Responsible for energy coupling to the transport system. This chain is Methionine import ATP-binding protein MetN 1, found in Pseudomonas aeruginosa (strain UCBPP-PA14).